The sequence spans 2173 residues: Mediator of RNA polymerase II transcription subunit 12 (2173 aa).

8 disordered regions span residues 1–34, 318–345, 630–718, 784–804, 1380–1404, 1443–1467, 1737–1780, and 2020–2068; these read MAAFGVLSYEHRPLKRPRLGPPDVYPQDPKQKED, GGHQAHGISAQQGNALPPTPTSQPAGGN, ASNS…KGMD, KSTAETGGEEGQKRKRSKPEA, MNSSNPSWNGSAVSGSSVSNSNSAS, ELEKGQHLGPSSRKERDRQKQKSMS, EEEP…VKQE, and QGIH…FRPQ. A compositionally biased stretch (basic and acidic residues) spans 702 to 717; sequence QAQEQESKSTAKDKGM. Over residues 1389-1404 the composition is skewed to low complexity; it reads GSAVSGSSVSNSNSAS. Composition is skewed to basic and acidic residues over residues 1443–1462 and 1747–1759; these read ELEKGQHLGPSSRKERDRQK and EPDKKLDTAKVEK. Residues 2034–2057 are compositionally biased toward low complexity; the sequence is QQQQQQQQQQQQQQQQQQVHQQQQ.

It belongs to the Mediator complex subunit 12 family. As to quaternary structure, component of the Mediator complex.

It is found in the nucleus. Its function is as follows. Component of the Mediator complex, a coactivator involved in regulated gene transcription of nearly all RNA polymerase II-dependent genes. Mediator functions as a bridge to convey information from gene-specific regulatory proteins to the basal RNA polymerase II transcription machinery. Mediator is recruited to promoters by direct interactions with regulatory proteins and serves as a scaffold for the assembly of a functional preinitiation complex with RNA polymerase II and the general transcription factors. Required for development of the body axis, brain, ear, kidney, forelimb and neural crest and for pigmentation. Acts as a coactivator for sox9a and/or sox9b promoting the expression of several neuronal determination genes. The sequence is that of Mediator of RNA polymerase II transcription subunit 12 (med12) from Danio rerio (Zebrafish).